A 424-amino-acid polypeptide reads, in one-letter code: Tyrosine--tRNA ligase (424 aa).

Y37 is a binding site for L-tyrosine. Positions 42-51 (PTADSLHLGH) match the 'HIGH' region motif. K144 carries the N6-acetyllysine modification. L-tyrosine is bound by residues Y175 and Q179. The 'KMSKS' region motif lies at 235–239 (KFGKT). K238 is a binding site for ATP. The S4 RNA-binding domain maps to 357–414 (ADLMQALVDSELQPSRGQARKTIASNAVTINGEKQSDPEYFFKEEDRLFGRFTLLRRG).

This sequence belongs to the class-I aminoacyl-tRNA synthetase family. TyrS type 1 subfamily. Homodimer.

The protein resides in the cytoplasm. It catalyses the reaction tRNA(Tyr) + L-tyrosine + ATP = L-tyrosyl-tRNA(Tyr) + AMP + diphosphate + H(+). In terms of biological role, catalyzes the attachment of tyrosine to tRNA(Tyr) in a two-step reaction: tyrosine is first activated by ATP to form Tyr-AMP and then transferred to the acceptor end of tRNA(Tyr). This Escherichia fergusonii (strain ATCC 35469 / DSM 13698 / CCUG 18766 / IAM 14443 / JCM 21226 / LMG 7866 / NBRC 102419 / NCTC 12128 / CDC 0568-73) protein is Tyrosine--tRNA ligase.